We begin with the raw amino-acid sequence, 343 residues long: UPF0284 protein Msed_0735 (343 aa).

Belongs to the UPF0284 family.

The protein is UPF0284 protein Msed_0735 of Metallosphaera sedula (strain ATCC 51363 / DSM 5348 / JCM 9185 / NBRC 15509 / TH2).